We begin with the raw amino-acid sequence, 145 residues long: Large ribosomal subunit protein uL15 (145 aa).

The tract at residues 1–52 (MRLNTLSPAAGSKRVKHRPGRGIGSGLGKTGGRGVKGQTSRSGGGKVRNGFE) is disordered. Composition is skewed to gly residues over residues 21-35 (RGIG…GRGV) and 42-52 (SGGGKVRNGFE).

Belongs to the universal ribosomal protein uL15 family. In terms of assembly, part of the 50S ribosomal subunit.

Binds to the 23S rRNA. This Aeromonas hydrophila subsp. hydrophila (strain ATCC 7966 / DSM 30187 / BCRC 13018 / CCUG 14551 / JCM 1027 / KCTC 2358 / NCIMB 9240 / NCTC 8049) protein is Large ribosomal subunit protein uL15.